The sequence spans 288 residues: Syntaxin-1A (288 aa).

At 1-265 the chain is on the cytoplasmic side; the sequence is MKDRTQELRT…KYQSKARRKK (265 aa). Ser14, Ser64, and Ser95 each carry phosphoserine. Residues 68–109 are a coiled coil; it reads DEKTKEELEELMSDIKKTANKVRSKLKSIEQSIEQEEGLNRS. A Phosphoserine; by DAPK1 modification is found at Ser188. The t-SNARE coiled-coil homology domain occupies 192-254; that stretch reads LSEIETRHSE…ERAVSDTKKA (63 aa). Glycyl lysine isopeptide (Lys-Gly) (interchain with G-Cter in SUMO) cross-links involve residues Lys252, Lys253, and Lys256. Residues 266-286 form a helical; Anchor for type IV membrane protein membrane-spanning segment; it reads IMIIICCVIPGIVIASTVGGI. Residues 287 to 288 lie on the Extracellular side of the membrane; it reads FA.

This sequence belongs to the syntaxin family. Part of the SNARE core complex containing SNAP25, VAMP2 and STX1A; this complex constitutes the basic catalytic machinery of the complex neurotransmitter release apparatus. The SNARE complex interacts with CPLX1. Interacts with STXBP1. The interaction with STXBP1 promotes assembly of the SNARE complex. Interacts (via C-terminus) with KCNB1 (via C-terminus); the interaction increases in a calcium-dependent manner and induces a pore-independent enhancement of exocytosis in neuroendocrine cells, chromaffin cells, pancreatic beta cells and from the soma of dorsal root ganglia (DRG) neurons. Interacts with SYTL4. Interacts with STXBP6. Interacts with PLCL1 (via C2 domain). Interacts with OTOF. Interacts with LGI3. Interacts (via the H3 domain) with SLC6A4 (via the N-terminus); this interaction regulates SLC4A6 channel conductance in thalamocortical neurons. Interacts with SYT6 and SYT8; the interaction is Ca(2+)-dependent. Interacts with VAMP8. Interacts with SNAP23. Interacts with VAPA and SYBU. Interacts with PRRT2. Interacts with SEPT8. Interacts with STXBP5L. Interacts with synaptotagmin-1/SYT1. Interacts with SEPTIN5; in the cerebellar cortex. Interacts with SEPTIN4; in the striatum. In terms of processing, phosphorylated by CK2. Phosphorylation at Ser-188 by DAPK1 significantly decreases its interaction with STXBP1. Post-translationally, sumoylated, sumoylation is required for regulation of synaptic vesicle endocytosis.

It is found in the cytoplasmic vesicle. The protein resides in the secretory vesicle. It localises to the synaptic vesicle membrane. Its subcellular location is the cell membrane. The protein localises to the synapse. It is found in the synaptosome. In terms of biological role, plays an essential role in hormone and neurotransmitter calcium-dependent exocytosis and endocytosis. Part of the SNARE (Soluble NSF Attachment Receptor) complex composed of SNAP25, STX1A and VAMP2 which mediates the fusion of synaptic vesicles with the presynaptic plasma membrane. STX1A and SNAP25 are localized on the plasma membrane while VAMP2 resides in synaptic vesicles. The pairing of the three SNAREs from the N-terminal SNARE motifs to the C-terminal anchors leads to the formation of the SNARE complex, which brings membranes into close proximity and results in final fusion. Participates in the calcium-dependent regulation of acrosomal exocytosis in sperm. Also plays an important role in the exocytosis of hormones such as insulin or glucagon-like peptide 1 (GLP-1). This Pongo abelii (Sumatran orangutan) protein is Syntaxin-1A (STX1A).